Reading from the N-terminus, the 280-residue chain is Bifunctional protein FolD (280 aa).

NADP(+)-binding positions include 166–168 (GRS) and Ser191.

This sequence belongs to the tetrahydrofolate dehydrogenase/cyclohydrolase family. As to quaternary structure, homodimer.

The catalysed reaction is (6R)-5,10-methylene-5,6,7,8-tetrahydrofolate + NADP(+) = (6R)-5,10-methenyltetrahydrofolate + NADPH. It catalyses the reaction (6R)-5,10-methenyltetrahydrofolate + H2O = (6R)-10-formyltetrahydrofolate + H(+). Its pathway is one-carbon metabolism; tetrahydrofolate interconversion. In terms of biological role, catalyzes the oxidation of 5,10-methylenetetrahydrofolate to 5,10-methenyltetrahydrofolate and then the hydrolysis of 5,10-methenyltetrahydrofolate to 10-formyltetrahydrofolate. The sequence is that of Bifunctional protein FolD from Cellvibrio japonicus (strain Ueda107) (Pseudomonas fluorescens subsp. cellulosa).